A 396-amino-acid chain; its full sequence is S-adenosylmethionine synthase (396 aa).

His16 contacts ATP. Asp18 serves as a coordination point for Mg(2+). Glu44 contributes to the K(+) binding site. L-methionine contacts are provided by Glu57 and Gln100. A flexible loop region spans residues 100–110 (QSKDIALGVDK). ATP is bound by residues 176 to 178 (DGK), 243 to 244 (RF), Asp252, 258 to 259 (RK), Ala275, and Lys279. Asp252 is an L-methionine binding site. Lys283 is an L-methionine binding site.

Belongs to the AdoMet synthase family. As to quaternary structure, homotetramer; dimer of dimers. The cofactor is Mg(2+). K(+) serves as cofactor.

The protein localises to the cytoplasm. The enzyme catalyses L-methionine + ATP + H2O = S-adenosyl-L-methionine + phosphate + diphosphate. It functions in the pathway amino-acid biosynthesis; S-adenosyl-L-methionine biosynthesis; S-adenosyl-L-methionine from L-methionine: step 1/1. In terms of biological role, catalyzes the formation of S-adenosylmethionine (AdoMet) from methionine and ATP. The overall synthetic reaction is composed of two sequential steps, AdoMet formation and the subsequent tripolyphosphate hydrolysis which occurs prior to release of AdoMet from the enzyme. The protein is S-adenosylmethionine synthase of Lachnoclostridium phytofermentans (strain ATCC 700394 / DSM 18823 / ISDg) (Clostridium phytofermentans).